Consider the following 96-residue polypeptide: Dynein light chain roadblock-type 1 (96 aa).

Ala2 carries the post-translational modification N-acetylalanine.

The protein belongs to the GAMAD family. In terms of assembly, homodimer. The cytoplasmic dynein 1 complex consists of two catalytic heavy chains (HCs) and a number of non-catalytic subunits presented by intermediate chains (ICs), light intermediate chains (LICs) and light chains (LCs); the composition seems to vary in respect to the IC, LIC and LC composition. The heavy chain homodimer serves as a scaffold for the probable homodimeric assembly of the respective non-catalytic subunits. The ICs and LICs bind directly to the HC dimer and the LCs assemble on the IC dimer. Interacts with DYNLRB2. Interacts with DYNC1I1 and DYNC1I2. Interacts with RAB6A isoform 1 (GTP-bound); the interaction is direct. Interacts with RAB6A isoform 2 (GDP-bound); the interaction is direct. Interacts with RAB6B (GDP-bound).

The protein resides in the cytoplasm. The protein localises to the cytoskeleton. Its function is as follows. Acts as one of several non-catalytic accessory components of the cytoplasmic dynein 1 complex that are thought to be involved in linking dynein to cargos and to adapter proteins that regulate dynein function. Cytoplasmic dynein 1 acts as a motor for the intracellular retrograde motility of vesicles and organelles along microtubules. This is Dynein light chain roadblock-type 1 (Dynlrb1) from Mus musculus (Mouse).